The following is a 391-amino-acid chain: Formate-dependent phosphoribosylglycinamide formyltransferase (391 aa).

Residues 20–21 (EL) and E80 each bind N(1)-(5-phospho-beta-D-ribosyl)glycinamide. Residues R112, K153, 158-163 (SSGKGQ), 193-196 (EGFI), and E201 contribute to the ATP site. Residues 117 to 306 (RLAAEELGLT…EFALHVRAFT (190 aa)) form the ATP-grasp domain. Mg(2+) contacts are provided by E265 and E277. N(1)-(5-phospho-beta-D-ribosyl)glycinamide-binding positions include D284, K354, and 361–362 (RR).

It belongs to the PurK/PurT family. Homodimer.

The enzyme catalyses N(1)-(5-phospho-beta-D-ribosyl)glycinamide + formate + ATP = N(2)-formyl-N(1)-(5-phospho-beta-D-ribosyl)glycinamide + ADP + phosphate + H(+). Its pathway is purine metabolism; IMP biosynthesis via de novo pathway; N(2)-formyl-N(1)-(5-phospho-D-ribosyl)glycinamide from N(1)-(5-phospho-D-ribosyl)glycinamide (formate route): step 1/1. In terms of biological role, involved in the de novo purine biosynthesis. Catalyzes the transfer of formate to 5-phospho-ribosyl-glycinamide (GAR), producing 5-phospho-ribosyl-N-formylglycinamide (FGAR). Formate is provided by PurU via hydrolysis of 10-formyl-tetrahydrofolate. This is Formate-dependent phosphoribosylglycinamide formyltransferase from Vibrio vulnificus (strain CMCP6).